Reading from the N-terminus, the 567-residue chain is MPSEKATTRHLPGAVETLSPRTGRRPETPAYGSWLLGRVSESPRMRRVRIQGMLTVAILVTNVIGLIVGAMLLTVAFPKPSVILDAPHWVSFGIVPGYCVLAFILGTYWLTRQTARALRWAIEERTPSHDEARSAFLVPLRVALAVLFLWGAAAALWTIIYGLANRLFIPRFLFSMGVIGVVAATSCYLLTEFALRPMAAQALEVGATPRSLVRGIVGRTMLVWLLCSGVPNVGVALTAIFDDTFWELSNDQFMITVLILWAPLLIFGFILMWILAWLTATPVRVVREALNRVEQGDLSGDLVVFDGTELGELQRGFNRMVEGLRERERVRDLFGRHVGREVAAAAERERPKLGGEERHVAVVFVDIVGSTQLVTSRPAAEVVMLLNRFFTVIVDEVNHHRGLVNKFQGDASLAVFGAPNRLSHPEDAALATARAIADRLASEMPECQAGIGVAAGQVVAGNVGAHERFEYTVIGEPVNEAARLCELAKSYPSRLLASSQTLRGASENECARWSLGETVTLRGHDQPIRLASPVQQLQMPAQSADIVGGALGDHQTHTIYRGAHPTD.

A disordered region spans residues 1 to 26; sequence MPSEKATTRHLPGAVETLSPRTGRRP. 6 consecutive transmembrane segments (helical) span residues 57–77, 90–110, 142–162, 173–193, 221–241, and 257–277; these read AILV…TVAF, VSFG…TYWL, VALA…IIYG, LFSM…LTEF, MLVW…TAIF, and VLIL…ILAW. Positions 277–329 constitute an HAMP domain; that stretch reads WLTATPVRVVREALNRVEQGDLSGDLVVFDGTELGELQRGFNRMVEGLRERER. The Guanylate cyclase domain maps to 361–485; it reads AVVFVDIVGS…EPVNEAARLC (125 aa).

It belongs to the adenylyl cyclase class-3 family.

The protein resides in the cell membrane. This is an uncharacterized protein from Mycobacterium bovis (strain ATCC BAA-935 / AF2122/97).